A 163-amino-acid chain; its full sequence is GPI-anchored protein LLG2 (163 aa).

The N-terminal stretch at 1 to 23 (MEISPYCLLSLLPIFLLSGFSLS) is a signal peptide. Residue N52 is glycosylated (N-linked (GlcNAc...) asparagine). The GPI-anchor amidated serine moiety is linked to residue S135. Residues 136–163 (DSIPRASTTASLAVLSTFLVLCLLFLSS) constitute a propeptide, removed in mature form.

In terms of tissue distribution, expressed in pollen, pollen tubes, sporophytic pistil tissues, in the early stages of female gametophyte development, and in unfertilized, mature ovules.

The protein resides in the cell membrane. The polypeptide is GPI-anchored protein LLG2 (Arabidopsis thaliana (Mouse-ear cress)).